Here is a 512-residue protein sequence, read N- to C-terminus: Immunoglobulin delta heavy chain (512 aa).

2 Ig-like domains span residues 1–97 (RLQL…MYYC) and 135–227 (PDVF…KEIF). The interval 1–129 (RLQLQESGPG…GQGTTVHVSS (129 aa)) is variable (V) domain, involved in antigen recognition. 2 disulfides stabilise this stretch: C22–C97 and C157–C213. Residues 130 to 512 (APTKAPDVFP…VSYVTDHGPM (383 aa)) are constant (C) domain. Positions 225–296 (EIFRWPESPK…TPECPSHTQP (72 aa)) are disordered. Residues 235-247 (AQASSVPTAQPQA) are compositionally biased toward polar residues. O-linked (GalNAc...) serine glycosylation occurs at S238. 4 O-linked (GalNAc...) threonine glycosylation sites follow: T255, T256, T260, and T261. Positions 267 to 287 (GGEEKKKEKEKEEQEERETKT) are enriched in basic and acidic residues. Ig-like domains lie at 304-392 (PAVQ…RLMA) and 396-502 (PAAQ…RSLE). Disulfide bonds link C319/C378 and C423/C484. N-linked (GlcNAc...) asparagine glycosylation is found at N354, N445, and N496.

In terms of assembly, immunoglobulins are composed of two identical heavy chains and two identical light chains; disulfide-linked. An IgD molecule contains thus a delta heavy chain combined with either a kappa or a lambda light chains. Kappa light chains are found predominantly on the membrane IgD (mIgD) form and lambda on the secreted IgD (sIgD) form, this fact is poorly understood. Membrane-bound IgD molecules are non-covalently associated with a heterodimer of CD79A and CD79B.

It is found in the secreted. The protein resides in the cell membrane. In terms of biological role, immunoglobulins, also known as antibodies, are membrane-bound or secreted glycoproteins produced by B lymphocytes. In the recognition phase of humoral immunity, the membrane-bound immunoglobulins serve as receptors which, upon binding of a specific antigen, trigger the clonal expansion and differentiation of B lymphocytes into immunoglobulins-secreting plasma cells. Secreted immunoglobulins mediate the effector phase of humoral immunity, which results in the elimination of bound antigens. The antigen binding site is formed by the variable domain of one heavy chain, together with that of its associated light chain. Thus, each immunoglobulin has two antigen binding sites with remarkable affinity for a particular antigen. The variable domains are assembled by a process called V-(D)-J rearrangement and can then be subjected to somatic hypermutations which, after exposure to antigen and selection, allow affinity maturation for a particular antigen. IgD is the major antigen receptor isotype on the surface of most peripheral B cells, where it is coexpressed with IgM. The membrane-bound IgD (mIgD) induces the phosphorylation of CD79A and CD79B by the Src family of protein tyrosine kinases. Soluble IgD (sIgD) concentration in serum is below those of IgG, IgA, and IgM but much higher than that of IgE. IgM and IgD molecules present on B cells have identical V regions and antigen-binding sites. After the antigen binds to the B cell receptor, the secreted form sIgD is shut off. IgD is a potent inducer of TNF, IL1B, and IL1RN. IgD also induces release of IL6, IL10, and LIF from peripheral blood mononuclear cells. Monocytes seem to be the main producers of cytokines in vitro in the presence of IgD. This chain is Immunoglobulin delta heavy chain, found in Homo sapiens (Human).